Here is a 205-residue protein sequence, read N- to C-terminus: N-(5'-phosphoribosyl)anthranilate isomerase (205 aa).

It belongs to the TrpF family.

The catalysed reaction is N-(5-phospho-beta-D-ribosyl)anthranilate = 1-(2-carboxyphenylamino)-1-deoxy-D-ribulose 5-phosphate. It functions in the pathway amino-acid biosynthesis; L-tryptophan biosynthesis; L-tryptophan from chorismate: step 3/5. This chain is N-(5'-phosphoribosyl)anthranilate isomerase, found in Thiobacillus denitrificans (strain ATCC 25259 / T1).